A 552-amino-acid chain; its full sequence is MVTKHRPVQAYTGSTLHAKGWIQEAALRMLNNNLHPEVAERPEDLVVYGGIGKAARNWECYGAIVETLLNLENDETLLIQSGKPVAVFKTHTDAPRVLIANSNLVPAWATWDHFHELDKKGLIMYGQMTAGSWIYIGSQGIVQGTYETFAEVARQHYGGTLKGTITVTAGLGGMGGAQPLAVTLNGGVCIAVEVDPARIQRRIDTKYLDTMTDRLDVAIQMAKRAKEEGKALSIGLLGNAAEVLPKMIEIGFIPDVLTDQTSAHDPLNGYIPAGMTLEEAAELRQRDPKQYIRRAKQSIAEHVKAMLAMQKQGSVTFDYGNNIRQVAKDEGVEEAFNFPGFVPAYIRPLFCEGKGPFRWVALSGDPEDIYKTDEVILREFSDNQHLCNWIRMAREKIQFQGLPARICWLGYGERAKFGKIINDMVAKGELKAPIVIGRDHLDSGSVASPNRETEGMKDGSDAIADWPILNALLNAVGGASWVSVHHGGGVGMGYSIHAGMVIVADGTKEAEKRLERVLTTDPGLGVVRHADAGYELAIKTAKEKGIHMPMLK.

Residues 49 to 50, Gln-127, 173 to 175, Glu-193, Arg-198, 239 to 240, 260 to 264, 270 to 271, and Tyr-319 each bind NAD(+); these read GG, GMG, NA, QTSAH, and YI. Residue Cys-407 is part of the active site. Gly-489 is a binding site for NAD(+).

Belongs to the urocanase family. It depends on NAD(+) as a cofactor.

It is found in the cytoplasm. The enzyme catalyses 4-imidazolone-5-propanoate = trans-urocanate + H2O. Its pathway is amino-acid degradation; L-histidine degradation into L-glutamate; N-formimidoyl-L-glutamate from L-histidine: step 2/3. Its function is as follows. Catalyzes the conversion of urocanate to 4-imidazolone-5-propionate. The protein is Urocanate hydratase of Geobacillus sp. (strain WCH70).